A 933-amino-acid polypeptide reads, in one-letter code: Progesterone receptor (933 aa).

A disordered region spans residues 1–157 (MTELKAKGPR…PEDPPAAPAT (157 aa)). An AF3; mediates transcriptional activation (in isoform B) region spans residues 1-164 (MTELKAKGPR…PATQRVLSPL (164 aa)). A modulating, Pro-Rich region spans residues 1-566 (MTELKAKGPR…YSFESLPQKI (566 aa)). Residue Lys-7 forms a Glycyl lysine isopeptide (Lys-Gly) (interchain with G-Cter in SUMO) linkage. Phosphoserine is present on Ser-20. The short motif at 55-59 (LDGLL) is the LXXL motif 1 element. A phosphoserine mark is found at Ser-81 and Ser-102. Positions 115–119 (LDTLL) match the LXXL motif 2 motif. Phosphoserine occurs at positions 130 and 162. The segment at 165 to 305 (MSRSGCKVGD…LATTVMDFIH (141 aa)) is mediates transcriptional transrepression (in isoform A). A Nuclear localization signal motif is present at residues 183-187 (KVLPR). Ser-190 and Ser-213 each carry phosphoserine. Residues 195-241 (LLLPASESPHWSGAPVKPSPQAAAVEVEEEDGSESEESAGPLLKGKP) are disordered. The span at 220–231 (EVEEEDGSESEE) shows a compositional bias: acidic residues. The span at 232 to 241 (SAGPLLKGKP) shows a compositional bias: low complexity. Ser-294 is modified (phosphoserine; by MAPK1). The segment at 331 to 351 (GGAGAASAFAPPRSSPCASST) is disordered. Residues 335–350 (AASAFAPPRSSPCASS) are compositionally biased toward low complexity. Phosphoserine; by MAPK is present on Ser-345. A Glycyl lysine isopeptide (Lys-Gly) (interchain with G-Cter in SUMO); alternate cross-link involves residue Lys-388. Residue Lys-388 forms a Glycyl lysine isopeptide (Lys-Gly) (interchain with G-Cter in ubiquitin); alternate linkage. At Ser-400 the chain carries Phosphoserine; by CDK2. The interval 415–452 (PDFPLGPPPPLPPRATPSRPGEAAVTAAPASASVSSAS) is disordered. Over residues 418–429 (PLGPPPPLPPRA) the composition is skewed to pro residues. The span at 430–452 (TPSRPGEAAVTAAPASASVSSAS) shows a compositional bias: low complexity. The AF1; mediates transcriptional activation stretch occupies residues 456-546 (STLECILYKA…VYPPYLNYLR (91 aa)). A Glycyl lysine isopeptide (Lys-Gly) (interchain with G-Cter in SUMO) cross-link involves residue Lys-531. 2 consecutive NR C4-type zinc fingers follow at residues 567–587 (CLICGDEASGCHYGVLTCGSC) and 603–627 (CAGRNDCIVDKIRRKNCPACRLRKC). The segment at residues 567 to 639 (CLICGDEASG…AGMVLGGRKF (73 aa)) is a DNA-binding region (nuclear receptor). A Phosphoserine modification is found at Ser-676. Residues 679–913 (QDIQLIPPLI…EFPEMMSEVI (235 aa)) form the NR LBD domain. Positions 687–933 (LINLLMSIEP…MVKPLLFHKK (247 aa)) are AF2; mediates transcriptional activation. Arg-766 lines the progesterone pocket.

Belongs to the nuclear hormone receptor family. NR3 subfamily. Interacts with SMARD1 and UNC45A. Interacts with CUEDC2; the interaction promotes ubiquitination, decreases sumoylation, and represses transcriptional activity. Interacts with PIAS3; the interaction promotes sumoylation of PR in a hormone-dependent manner, inhibits DNA-binding, and alters nuclear export. Interacts with SP1; the interaction requires ligand-induced phosphorylation on Ser-345 by ERK1/2 MAPK. Interacts with PRMT2. Isoform A interacts with NCOR2. Isoform B (but not isoform A) interacts with NCOA2 and NCOA1. Isoform B (but not isoform A) interacts with KLF9. Interacts with GTF2B. Phosphorylated on multiple serine sites. Several of these sites are hormone-dependent. Phosphorylation on Ser-294 occurs preferentially on isoform B, is highly hormone-dependent and modulates ubiquitination and sumoylation on Lys-388. Phosphorylation on Ser-102 and Ser-345 also requires induction by hormone. Basal phosphorylation on Ser-81, Ser-162, Ser-190 and Ser-400 is increased in response to progesterone and can be phosphorylated in vitro by the CDK2-A1 complex. Increased levels of phosphorylation on Ser-400 also in the presence of EGF, heregulin, IGF, PMA and FBS. Phosphorylation at this site by CDK2 is ligand-independent, and increases nuclear translocation and transcriptional activity. Phosphorylation at Ser-162 and Ser-294, but not at Ser-190, is impaired during the G(2)/M phase of the cell cycle. Phosphorylation on Ser-345 by ERK1/2 MAPK is required for interaction with SP1. Post-translationally, sumoylation is hormone-dependent and represses transcriptional activity. Sumoylation on all three sites is enhanced by PIAS3. Desumoylated by SENP1. Sumoylation on Lys-388, the main site of sumoylation, is repressed by ubiquitination on the same site, and modulated by phosphorylation at Ser-294. In terms of processing, ubiquitination is hormone-dependent and represses sumoylation on the same site. Promoted by MAPK-mediated phosphorylation on Ser-294. Ubiquitinated by UBR5, leading to its degradation: UBR5 specifically recognizes and binds ligand-bound PGR when it is not associated with coactivators (NCOAs). In presence of NCOAs, the UBR5-degron is not accessible, preventing its ubiquitination and degradation. Palmitoylated by ZDHHC7 and ZDHHC21. Palmitoylation is required for plasma membrane targeting and for rapid intracellular signaling via ERK and AKT kinases and cAMP generation. As to expression, in reproductive tissues the expression of isoform A and isoform B varies as a consequence of developmental and hormonal status. Isoform A and isoform B are expressed in comparable levels in uterine glandular epithelium during the proliferative phase of the menstrual cycle. Expression of isoform B but not of isoform A persists in the glands during mid-secretory phase. In the stroma, isoform A is the predominant form throughout the cycle. Heterogeneous isoform expression between the glands of the endometrium basalis and functionalis is implying region-specific responses to hormonal stimuli.

The protein localises to the nucleus. The protein resides in the cytoplasm. It is found in the mitochondrion outer membrane. The steroid hormones and their receptors are involved in the regulation of eukaryotic gene expression and affect cellular proliferation and differentiation in target tissues. Depending on the isoform, progesterone receptor functions as a transcriptional activator or repressor. Functionally, ligand-dependent transdominant repressor of steroid hormone receptor transcriptional activity including repression of its isoform B, MR and ER. Transrepressional activity may involve recruitment of corepressor NCOR2. In terms of biological role, transcriptional activator of several progesteron-dependent promoters in a variety of cell types. Involved in activation of SRC-dependent MAPK signaling on hormone stimulation. Its function is as follows. Increases mitochondrial membrane potential and cellular respiration upon stimulation by progesterone. This is Progesterone receptor (PGR) from Homo sapiens (Human).